The following is a 908-amino-acid chain: Chloride channel protein 2 (908 aa).

Over 1–95 (MAAATAAAAA…RCHKFLVSRV (95 aa)) the chain is Cytoplasmic. Residues 24–42 (QYEQTLMYGRYTQELGAFA) are essential for channel gating by both voltage and cell volume. A Phosphothreonine modification is found at Thr28. The interval 44-57 (EEAARIRLGGPEPW) is modulates channel gating by both voltage and cell volume. 2 consecutive transmembrane segments (helical) span residues 96-129 (GEDW…AQQW) and 138-163 (ILLQ…TQIL). The Selectivity filter part_1 motif lies at 169–173 (GSGIP). Ser170 lines the chloride pocket. An intramembrane region (helical) is located at residues 172–179 (IPEMKTIL). Helical transmembrane passes span 188–206 (LTLK…ALGS) and 213–231 (EGPF…SKFL). The Selectivity filter part_2 signature appears at 211 to 215 (GKEGP). Intramembrane regions (helical) lie at residues 247-259 (MLAA…VGCC) and 263-271 (PIGGVLFSI). The next 5 membrane-spanning stretches (helical) occupy residues 283-303 (YWRG…LAVW), 329-357 (LPAF…VQVM), 366-385 (FLMR…ISTL), 437-457 (ANVF…SALA), and 465-488 (GAFM…MAAW). The Selectivity filter part_3 motif lies at 465–469 (GAFMP). Residue Phe467 participates in chloride binding. The helical intramembrane region spans 505–519 (GGYAVVGAAALAGAV). Residues 520–521 (TH) constitute an intramembrane region (note=Loop between two helices). Positions 522–533 (TVSTAVIVFELT) form an intramembrane region, helical. Residues 534–538 (GQIAH) constitute an intramembrane region (note=Loop between two helices). Residues 539–556 (ILPVMIAVILANAVAQSL) traverse the membrane as a helical segment. Over 557 to 908 (QPSLYDSIIR…TPSDSDDKCQ (352 aa)) the chain is Cytoplasmic. A chloride-binding site is contributed by Tyr561. The CBS 1 domain maps to 592-650 (MVRDVPHVALSCTFRDLRLALHRTKGRMLALVESPESMILLGSIERSQVVALLGAQLSP). Over residues 653-662 (RRQHMQKLRK) the composition is skewed to basic residues. Positions 653 to 722 (RRQHMQKLRK…NSTSLQEGTT (70 aa)) are disordered. Low complexity predominate over residues 666 to 680 (SPPSDQESPPSSETS). Residues 681-690 (IRFQVNTEDS) show a composition bias toward polar residues. The span at 698 to 707 (QTHKPLKPAL) shows a compositional bias: basic residues. The span at 711–722 (PSNSTSLQEGTT) shows a compositional bias: polar residues. Ser768 bears the Phosphoserine mark. One can recognise a CBS 2 domain in the interval 800–860 (IDPAPFQLVE…GSVTAQGVKV (61 aa)). The short motif at 822-823 (LL) is the Basolateral membrane sorting element. Residues 866 to 908 (SFRDSATSSSDTETTEVHALWGPRSRHGLPREGTPSDSDDKCQ) are disordered.

It belongs to the chloride channel (TC 2.A.49) family. ClC-2/CLCN2 subfamily. In terms of assembly, homodimer. Interacts with auxiliary subunit HEPACAM. In terms of processing, phosphorylated. Activated by dephosphorylation. Expressed in the adrenal gland and brain. Expressed in intestinal epithelium (at protein level). Expressed in salivary gland (at protein level).

The protein localises to the cell membrane. It is found in the myelin membrane. The protein resides in the basolateral cell membrane. Its subcellular location is the cell projection. It localises to the dendritic spine membrane. The protein localises to the axon. The enzyme catalyses chloride(in) = chloride(out). The catalysed reaction is thiocyanate(in) = thiocyanate(out). It catalyses the reaction bromide(in) = bromide(out). It carries out the reaction nitrate(in) = nitrate(out). The enzyme catalyses iodide(out) = iodide(in). Common gate kinetics are down-regulated by intracellular ATP. Inhibited by AK-42, a derivative of meclofenamate. Inhibited by Cd(2+). Inhibited by Zn(2+) and PKC activation. Inhibited at acidic pH. CCLN2:HEPACAM channel conductance is up-regulated upon hypo-osmolarity. Voltage-gated and osmosensitive chloride channel. Forms a homodimeric channel where each subunit has its own ion conduction pathway. Conducts double-barreled currents controlled by two types of gates, two fast glutamate gates that control each subunit independently and a slow common gate that opens and shuts off both subunits simultaneously. Displays inward rectification currents activated upon membrane hyperpolarization and extracellular hypotonicity. Contributes to chloride conductance involved in neuron excitability. In hippocampal neurons, generates a significant part of resting membrane conductance and provides an additional chloride efflux pathway to prevent chloride accumulation in dendrites upon GABA receptor activation. In glia, associates with the auxiliary subunit HEPACAM/GlialCAM at astrocytic processes and myelinated fiber tracts where it may regulate transcellular chloride flux buffering extracellular chloride and potassium concentrations. Regulates aldosterone production in adrenal glands. The opening of CLCN2 channels at hyperpolarized membrane potentials in the glomerulosa causes cell membrane depolarization, activation of voltage-gated calcium channels and increased expression of aldosterone synthase, the rate-limiting enzyme for aldosterone biosynthesis. Contributes to chloride conductance in retinal pigment epithelium involved in phagocytosis of shed photoreceptor outer segments and photoreceptor renewal. Conducts chloride currents at the basolateral membrane of epithelial cells with a role in chloride reabsorption rather than secretion. Permeable to small monovalent anions with chloride &gt; thiocyanate &gt; bromide &gt; nitrate &gt; iodide ion selectivity. This Mus musculus (Mouse) protein is Chloride channel protein 2 (Clcn2).